The following is a 173-amino-acid chain: NADH-ubiquinone oxidoreductase chain 6 (173 aa).

4 helical membrane passes run 12-32, 47-67, 94-114, and 142-162; these read VFWL…VSLV, GSFL…VIFA, VVLA…GECG, and GALM…LVLV.

The protein belongs to the complex I subunit 6 family.

It is found in the mitochondrion membrane. The catalysed reaction is a ubiquinone + NADH + 5 H(+)(in) = a ubiquinol + NAD(+) + 4 H(+)(out). Core subunit of the mitochondrial membrane respiratory chain NADH dehydrogenase (Complex I) that is believed to belong to the minimal assembly required for catalysis. Complex I functions in the transfer of electrons from NADH to the respiratory chain. The immediate electron acceptor for the enzyme is believed to be ubiquinone. The polypeptide is NADH-ubiquinone oxidoreductase chain 6 (MT-ND6) (Pelomedusa subrufa (African side-necked turtle)).